We begin with the raw amino-acid sequence, 512 residues long: Respiratory nitrate reductase 1 beta chain (512 aa).

4Fe-4S ferredoxin-type domains lie at 7-35 (VGMV…SREG), 175-206 (TFMM…KREE), and 208-237 (GIVL…FNWK). 7 residues coordinate [4Fe-4S] cluster: Cys-16, Cys-19, Cys-22, Cys-26, Cys-184, Cys-187, and Cys-192. Cys-196, Cys-217, and Cys-223 together coordinate [3Fe-4S] cluster. [4Fe-4S] cluster contacts are provided by Cys-227, Cys-244, Cys-247, Cys-259, and Cys-263.

In terms of assembly, dimer of heterotrimers each composed of an alpha, a beta and a gamma chain. Alpha and beta are catalytic chains; gamma chains are involved in binding the enzyme complex to the cytoplasmic membrane. Requires [4Fe-4S] cluster as cofactor. [3Fe-4S] cluster serves as cofactor.

It is found in the cell membrane. It carries out the reaction nitrate + a quinol = a quinone + nitrite + H2O. Functionally, the nitrate reductase enzyme complex allows E.coli to use nitrate as an electron acceptor during anaerobic growth. The beta chain is an electron transfer unit containing four cysteine clusters involved in the formation of iron-sulfur centers. Electrons are transferred from the gamma chain to the molybdenum cofactor of the alpha subunit. The chain is Respiratory nitrate reductase 1 beta chain (narH) from Escherichia coli (strain K12).